We begin with the raw amino-acid sequence, 198 residues long: Proteasome subunit beta type-2 (198 aa).

Belongs to the peptidase T1B family. In terms of assembly, the 26S proteasome consists of a 20S proteasome core and two 19S regulatory subunits. The 20S proteasome core is composed of 28 subunits that are arranged in four stacked rings, resulting in a barrel-shaped structure. The two end rings are each formed by seven alpha subunits, and the two central rings are each formed by seven beta subunits. The catalytic chamber with the active sites is on the inside of the barrel.

Its subcellular location is the cytoplasm. The protein localises to the nucleus. In terms of biological role, non-catalytic component of the proteasome, a multicatalytic proteinase complex which is characterized by its ability to cleave peptides with Arg, Phe, Tyr, Leu, and Glu adjacent to the leaving group at neutral or slightly basic pH. The proteasome has an ATP-dependent proteolytic activity. The polypeptide is Proteasome subunit beta type-2 (psmB2) (Dictyostelium discoideum (Social amoeba)).